A 152-amino-acid chain; its full sequence is uncharacterized protein (152 aa).

A run of 3 helical transmembrane segments spans residues 15 to 35 (IINV…IYDI), 43 to 63 (LVVA…LILT), and 117 to 137 (TFLL…KLLI).

To M.jannaschii MJ0129 and MJ0587.

It is found in the cell membrane. This is an uncharacterized protein from Methanocaldococcus jannaschii (strain ATCC 43067 / DSM 2661 / JAL-1 / JCM 10045 / NBRC 100440) (Methanococcus jannaschii).